The following is a 244-amino-acid chain: Isoprenyl transferase (244 aa).

The active site involves Asp-23. Residue Asp-23 coordinates Mg(2+). Substrate contacts are provided by residues Gly-24 to Arg-27, Trp-28, Arg-36, His-40, and Ser-68 to Glu-70. Catalysis depends on Asn-71, which acts as the Proton acceptor. Substrate is bound by residues Trp-72, Arg-74, Arg-191, and Arg-197–Ser-199. Residue Glu-210 participates in Mg(2+) binding.

This sequence belongs to the UPP synthase family. As to quaternary structure, homodimer. Requires Mg(2+) as cofactor.

Functionally, catalyzes the condensation of isopentenyl diphosphate (IPP) with allylic pyrophosphates generating different type of terpenoids. The polypeptide is Isoprenyl transferase (Lactococcus lactis subsp. lactis (strain IL1403) (Streptococcus lactis)).